The following is a 432-amino-acid chain: Phosphomethylpyrimidine synthase (432 aa).

Residues Asn66, Met95, Tyr124, His163, 185 to 187 (SRG), 226 to 229 (DGMR), and Glu265 each bind substrate. His269 is a binding site for Zn(2+). Tyr292 provides a ligand contact to substrate. His333 contacts Zn(2+). 3 residues coordinate [4Fe-4S] cluster: Cys409, Cys412, and Cys416.

It belongs to the ThiC family. It depends on [4Fe-4S] cluster as a cofactor.

It carries out the reaction 5-amino-1-(5-phospho-beta-D-ribosyl)imidazole + S-adenosyl-L-methionine = 4-amino-2-methyl-5-(phosphooxymethyl)pyrimidine + CO + 5'-deoxyadenosine + formate + L-methionine + 3 H(+). The protein operates within cofactor biosynthesis; thiamine diphosphate biosynthesis. Its function is as follows. Catalyzes the synthesis of the hydroxymethylpyrimidine phosphate (HMP-P) moiety of thiamine from aminoimidazole ribotide (AIR) in a radical S-adenosyl-L-methionine (SAM)-dependent reaction. This Desulforudis audaxviator (strain MP104C) protein is Phosphomethylpyrimidine synthase.